The chain runs to 156 residues: Transcriptional repressor NrdR (156 aa).

The segment at 3–34 (CPFCGNVDTQVKDSRPAEDHVAIRRRRFCPAC) is a zinc-finger region. Residues 49 to 139 (LVVIKSNGKR…VYKNFQATGD (91 aa)) enclose the ATP-cone domain.

This sequence belongs to the NrdR family. It depends on Zn(2+) as a cofactor.

Functionally, negatively regulates transcription of bacterial ribonucleotide reductase nrd genes and operons by binding to NrdR-boxes. The sequence is that of Transcriptional repressor NrdR from Jannaschia sp. (strain CCS1).